The chain runs to 134 residues: Small ribosomal subunit protein uS8c (134 aa).

The protein belongs to the universal ribosomal protein uS8 family. In terms of assembly, part of the 30S ribosomal subunit.

Its subcellular location is the plastid. It localises to the chloroplast. Functionally, one of the primary rRNA binding proteins, it binds directly to 16S rRNA central domain where it helps coordinate assembly of the platform of the 30S subunit. This is Small ribosomal subunit protein uS8c (rps8) from Draba nemorosa (Woodland whitlowgrass).